We begin with the raw amino-acid sequence, 209 residues long: Egg case collagen (209 aa).

A nonhelical region region spans residues 1-129; it reads VYMSGXGKPP…YKGNHGFYLV (129 aa). The triple-helical region stretch occupies residues 130 to 209; it reads LPAGYPGTPG…DPGLPGEYGV (80 aa). Residues 138–209 are disordered; it reads PGTPGPRGGP…DPGLPGEYGV (72 aa). Positions 142 to 162 are enriched in gly residues; the sequence is GPRGGPGDPGMPGEPGVGFPG.

Its function is as follows. Major component of the egg case wall which is secreted by the oviduct. The egg case combines mechanical strength and toughness with high permeability to small molecules and ions. The chain is Egg case collagen from Scyliorhinus canicula (Small-spotted catshark).